The sequence spans 524 residues: Na(+)/H(+) antiporter NhaB (524 aa).

13 helical membrane passes run 23–43, 45–65, 98–118, 136–156, 203–223, 239–259, 304–324, 325–345, 358–378, 392–412, 420–440, 448–468, and 479–499; these read LAII…SPFV, GWML…CYPL, LLLI…LFIF, CVAS…AVVI, LMMH…VGEP, FFMR…LVCI, ALIG…VGLV, GLSV…HALG, LTVF…TPII, LFYL…VGTV, AFEL…AINT, ATPN…APLI, and ALPY…YLLV.

It belongs to the NhaB Na(+)/H(+) (TC 2.A.34) antiporter family.

The protein resides in the cell inner membrane. It carries out the reaction 2 Na(+)(in) + 3 H(+)(out) = 2 Na(+)(out) + 3 H(+)(in). In terms of biological role, na(+)/H(+) antiporter that extrudes sodium in exchange for external protons. This Yersinia enterocolitica serotype O:8 / biotype 1B (strain NCTC 13174 / 8081) protein is Na(+)/H(+) antiporter NhaB.